Here is a 310-residue protein sequence, read N- to C-terminus: HPr kinase/phosphorylase (310 aa).

Residues H138 and K159 contribute to the active site. 153 to 160 (GDSGIGKS) contributes to the ATP binding site. S160 is a binding site for Mg(2+). D177 (proton acceptor; for phosphorylation activity. Proton donor; for dephosphorylation activity) is an active-site residue. The segment at 201-210 (LEIRGVGIID) is important for the catalytic mechanism of both phosphorylation and dephosphorylation. Residue E202 coordinates Mg(2+). R243 is a catalytic residue. Residues 264–269 (PVKTGR) are important for the catalytic mechanism of dephosphorylation.

This sequence belongs to the HPrK/P family. In terms of assembly, homohexamer. It depends on Mg(2+) as a cofactor.

It carries out the reaction [HPr protein]-L-serine + ATP = [HPr protein]-O-phospho-L-serine + ADP + H(+). The catalysed reaction is [HPr protein]-O-phospho-L-serine + phosphate + H(+) = [HPr protein]-L-serine + diphosphate. In terms of biological role, catalyzes the ATP- as well as the pyrophosphate-dependent phosphorylation of a specific serine residue in HPr, a phosphocarrier protein of the phosphoenolpyruvate-dependent sugar phosphotransferase system (PTS). HprK/P also catalyzes the pyrophosphate-producing, inorganic phosphate-dependent dephosphorylation (phosphorolysis) of seryl-phosphorylated HPr (P-Ser-HPr). The two antagonistic activities of HprK/P are regulated by several intracellular metabolites, which change their concentration in response to the absence or presence of rapidly metabolisable carbon sources (glucose, fructose, etc.) in the growth medium. Therefore, by controlling the phosphorylation state of HPr, HPrK/P is a sensor enzyme that plays a major role in the regulation of carbon metabolism and sugar transport: it mediates carbon catabolite repression (CCR), and regulates PTS-catalyzed carbohydrate uptake and inducer exclusion. This chain is HPr kinase/phosphorylase, found in Streptococcus uberis (strain ATCC BAA-854 / 0140J).